The following is a 198-amino-acid chain: Imidazoleglycerol-phosphate dehydratase (198 aa).

This sequence belongs to the imidazoleglycerol-phosphate dehydratase family.

It localises to the cytoplasm. It catalyses the reaction D-erythro-1-(imidazol-4-yl)glycerol 3-phosphate = 3-(imidazol-4-yl)-2-oxopropyl phosphate + H2O. Its pathway is amino-acid biosynthesis; L-histidine biosynthesis; L-histidine from 5-phospho-alpha-D-ribose 1-diphosphate: step 6/9. The sequence is that of Imidazoleglycerol-phosphate dehydratase from Janthinobacterium sp. (strain Marseille) (Minibacterium massiliensis).